The primary structure comprises 142 residues: 3-hydroxyacyl-[acyl-carrier-protein] dehydratase FabZ (142 aa).

His48 is a catalytic residue.

Belongs to the thioester dehydratase family. FabZ subfamily.

The protein resides in the cytoplasm. It carries out the reaction a (3R)-hydroxyacyl-[ACP] = a (2E)-enoyl-[ACP] + H2O. Its function is as follows. Involved in unsaturated fatty acids biosynthesis. Catalyzes the dehydration of short chain beta-hydroxyacyl-ACPs and long chain saturated and unsaturated beta-hydroxyacyl-ACPs. The polypeptide is 3-hydroxyacyl-[acyl-carrier-protein] dehydratase FabZ (Anoxybacillus flavithermus (strain DSM 21510 / WK1)).